We begin with the raw amino-acid sequence, 378 residues long: Septin-5 (378 aa).

The Septin-type G domain occupies K50–Q323. Residues G60–S67 form a G1 motif region. Residues G60–S67, T94, and G120 each bind GTP. Residues D117–G120 are G3 motif. R177 carries the omega-N-methylarginine modification. A G4 motif region spans residues A198 to D201. K199–E207 is a GTP binding site. Residue S234 is modified to Phosphoserine. GTP contacts are provided by G257 and R272. At S336 the chain carries Phosphoserine. At T345 the chain carries Phosphothreonine. The stretch at D347–Q378 forms a coiled coil.

The protein belongs to the TRAFAC class TrmE-Era-EngA-EngB-Septin-like GTPase superfamily. Septin GTPase family. In terms of assembly, septins polymerize into heterooligomeric protein complexes that form filaments, and can associate with cellular membranes, actin filaments and microtubules. GTPase activity is required for filament formation. Interacts with SEPTIN2 and SEPTIN5. In platelets, associated with a complex containing STX4. Interacts with PRKN; this interaction leads to SEPTIN5 ubiquitination and degradation. Interacts with DYRK1A. Interacts with STX1A; in the cerebellar cortex. Post-translationally, phosphorylated by DYRK1A.

Its subcellular location is the cytoplasm. The protein localises to the cytoskeleton. In terms of biological role, filament-forming cytoskeletal GTPase. May play a role in cytokinesis (Potential). May play a role in platelet secretion. This chain is Septin-5, found in Macaca fascicularis (Crab-eating macaque).